Reading from the N-terminus, the 61-residue chain is MAKKSMIIKALRKPKYKTRQNNRCKLCGRPRGYLRDFCMCRICFRKYASEGLIPGVSKSSW.

Zn(2+) contacts are provided by cysteine 24, cysteine 27, cysteine 40, and cysteine 43.

It belongs to the universal ribosomal protein uS14 family. Zinc-binding uS14 subfamily. In terms of assembly, part of the 30S ribosomal subunit. Contacts proteins S3 and S10. Zn(2+) serves as cofactor.

Functionally, binds 16S rRNA, required for the assembly of 30S particles and may also be responsible for determining the conformation of the 16S rRNA at the A site. This is Small ribosomal subunit protein uS14 from Borreliella afzelii (strain PKo) (Borrelia afzelii).